Consider the following 33-residue polypeptide: Omega-conotoxin-like Vn2 (33 aa).

Disulfide bonds link cysteine 3/cysteine 20, cysteine 10/cysteine 24, and cysteine 19/cysteine 28. Proline 33 bears the Proline amide mark.

In terms of tissue distribution, expressed by the venom duct.

The protein localises to the secreted. Its function is as follows. Omega-conotoxins act at presynaptic membranes, they bind and block voltage-gated calcium channels (Cav). Has strong insecticidal properties at a dose of only 100 pmol/g of body weight (when injected into the haemocoel of the wax moth G.mellonella larvae). Provoques tremor and uncontrolled movements in insect larvae, that are typical symptoms caused by neurotoxins. On fish G.niger, intraperitoneal injection of the toxin causes full extension of the fins, change in posture, breathing difficulties (at 30 and 100 pmol/g body weight) and death (at 100 pmol/g body weight). The protein is Omega-conotoxin-like Vn2 of Conus ventricosus (Mediterranean cone).